Here is a 77-residue protein sequence, read N- to C-terminus: SS18-like protein 2 (77 aa).

The short motif at 50 to 53 (YQHV) is the SH2-binding element.

The protein belongs to the SS18 family.

The sequence is that of SS18-like protein 2 (SS18L2) from Homo sapiens (Human).